The sequence spans 906 residues: Protein translocase subunit SecA (906 aa).

Residues Gln-87, 105–109, and Asp-507 each bind ATP; that span reads GEGKT. Residues Cys-890, Cys-892, Cys-901, and His-902 each coordinate Zn(2+).

This sequence belongs to the SecA family. As to quaternary structure, monomer and homodimer. Part of the essential Sec protein translocation apparatus which comprises SecA, SecYEG and auxiliary proteins SecDF-YajC and YidC. It depends on Zn(2+) as a cofactor.

It is found in the cell inner membrane. Its subcellular location is the cytoplasm. It carries out the reaction ATP + H2O + cellular proteinSide 1 = ADP + phosphate + cellular proteinSide 2.. Its function is as follows. Part of the Sec protein translocase complex. Interacts with the SecYEG preprotein conducting channel. Has a central role in coupling the hydrolysis of ATP to the transfer of proteins into and across the cell membrane, serving both as a receptor for the preprotein-SecB complex and as an ATP-driven molecular motor driving the stepwise translocation of polypeptide chains across the membrane. The sequence is that of Protein translocase subunit SecA from Laribacter hongkongensis (strain HLHK9).